The primary structure comprises 606 residues: Threonine--tRNA ligase (606 aa).

The segment at 212–503 is catalytic; the sequence is DHRKLGVEMK…LIEHTAGELP (292 aa). Residues cysteine 304, histidine 355, and histidine 480 each coordinate Zn(2+).

The protein belongs to the class-II aminoacyl-tRNA synthetase family. In terms of assembly, homodimer. Zn(2+) serves as cofactor.

It is found in the cytoplasm. It carries out the reaction tRNA(Thr) + L-threonine + ATP = L-threonyl-tRNA(Thr) + AMP + diphosphate + H(+). Its function is as follows. Catalyzes the attachment of threonine to tRNA(Thr) in a two-step reaction: L-threonine is first activated by ATP to form Thr-AMP and then transferred to the acceptor end of tRNA(Thr). Also edits incorrectly charged L-seryl-tRNA(Thr). This is Threonine--tRNA ligase from Campylobacter curvus (strain 525.92).